The chain runs to 104 residues: Protamine-2 (104 aa).

Residues 1-91 (MVRYRMRSPS…RRGCRRSRRR (91 aa)) are disordered. A phosphoserine mark is found at Ser8, Ser10, and Ser33. Residues 33-44 (SPERVEDYGRTE) show a composition bias toward basic and acidic residues. The span at 45–91 (RGHHHRHRRCKRLHRIHKRRRSCRRRRRHSCRHRRRHRRGCRRSRRR) shows a compositional bias: basic residues.

Belongs to the protamine P2 family. Interacts with TDRP. Post-translationally, proteolytic processing into mature chains is required for histone eviction during spermatogenesis. Transition proteins (TNP1 and TNP2) are required for processing. As to expression, testis.

It localises to the nucleus. The protein resides in the chromosome. Its function is as follows. Protamines substitute for histones in the chromatin of sperm during the haploid phase of spermatogenesis. They compact sperm DNA into a highly condensed, stable and inactive complex. This Rattus norvegicus (Rat) protein is Protamine-2 (Prm2).